A 101-amino-acid polypeptide reads, in one-letter code: Small ribosomal subunit protein uS14A (101 aa).

Disordered regions lie at residues 1–20 and 28–72; these read MAKKSKIAKNDRRQETVARY and TEII…RPRG. Composition is skewed to basic and acidic residues over residues 38-53 and 61-70; these read EAERRAAQQELRRQPR and RNRDSVDGRP.

The protein belongs to the universal ribosomal protein uS14 family. As to quaternary structure, part of the 30S ribosomal subunit. Contacts proteins S3 and S10.

Its function is as follows. Binds 16S rRNA, required for the assembly of 30S particles and may also be responsible for determining the conformation of the 16S rRNA at the A site. The chain is Small ribosomal subunit protein uS14A from Streptomyces avermitilis (strain ATCC 31267 / DSM 46492 / JCM 5070 / NBRC 14893 / NCIMB 12804 / NRRL 8165 / MA-4680).